A 323-amino-acid polypeptide reads, in one-letter code: GTP 3',8-cyclase (323 aa).

The Radical SAM core domain maps to 4 to 228 (KYGRSIDYLR…VPVNIQNNGP (225 aa)). GTP is bound at residue Arg-13. The [4Fe-4S] cluster site is built by Cys-20 and Cys-24. Residue Tyr-26 participates in S-adenosyl-L-methionine binding. Cys-27 contributes to the [4Fe-4S] cluster binding site. GTP is bound at residue Arg-63. Gly-67 provides a ligand contact to S-adenosyl-L-methionine. Thr-94 is a binding site for GTP. S-adenosyl-L-methionine is bound at residue Ser-118. Position 155 (Lys-155) interacts with GTP. Residue Met-189 coordinates S-adenosyl-L-methionine. Residues Cys-252 and Cys-255 each coordinate [4Fe-4S] cluster. 257–259 (RMR) lines the GTP pocket. Cys-269 is a [4Fe-4S] cluster binding site.

This sequence belongs to the radical SAM superfamily. MoaA family. Monomer and homodimer. It depends on [4Fe-4S] cluster as a cofactor.

The catalysed reaction is GTP + AH2 + S-adenosyl-L-methionine = (8S)-3',8-cyclo-7,8-dihydroguanosine 5'-triphosphate + 5'-deoxyadenosine + L-methionine + A + H(+). It participates in cofactor biosynthesis; molybdopterin biosynthesis. In terms of biological role, catalyzes the cyclization of GTP to (8S)-3',8-cyclo-7,8-dihydroguanosine 5'-triphosphate. The sequence is that of GTP 3',8-cyclase from Petrotoga mobilis (strain DSM 10674 / SJ95).